The following is a 163-amino-acid chain: NADH-quinone oxidoreductase subunit I (163 aa).

2 4Fe-4S ferredoxin-type domains span residues 54 to 84 (LRRYPNGEERCIACKLCEAVCPANAITIESE) and 94 to 123 (IVYDIDLFKCIFCGFCEEACPVDAIVETQI). Cysteine 64, cysteine 67, cysteine 70, cysteine 74, cysteine 103, cysteine 106, cysteine 109, and cysteine 113 together coordinate [4Fe-4S] cluster.

This sequence belongs to the complex I 23 kDa subunit family. As to quaternary structure, NDH-1 is composed of 14 different subunits. Subunits NuoA, H, J, K, L, M, N constitute the membrane sector of the complex. The cofactor is [4Fe-4S] cluster.

The protein resides in the cell inner membrane. It carries out the reaction a quinone + NADH + 5 H(+)(in) = a quinol + NAD(+) + 4 H(+)(out). Its function is as follows. NDH-1 shuttles electrons from NADH, via FMN and iron-sulfur (Fe-S) centers, to quinones in the respiratory chain. The immediate electron acceptor for the enzyme in this species is believed to be ubiquinone. Couples the redox reaction to proton translocation (for every two electrons transferred, four hydrogen ions are translocated across the cytoplasmic membrane), and thus conserves the redox energy in a proton gradient. This chain is NADH-quinone oxidoreductase subunit I, found in Ruthia magnifica subsp. Calyptogena magnifica.